The sequence spans 443 residues: Tol-Pal system protein TolB (443 aa).

Residues 1–33 (MKIGIINTKIRTVFSAFACMIAASLVCTMPARA) form the signal peptide.

It belongs to the TolB family. As to quaternary structure, the Tol-Pal system is composed of five core proteins: the inner membrane proteins TolA, TolQ and TolR, the periplasmic protein TolB and the outer membrane protein Pal. They form a network linking the inner and outer membranes and the peptidoglycan layer.

It is found in the periplasm. Its function is as follows. Part of the Tol-Pal system, which plays a role in outer membrane invagination during cell division and is important for maintaining outer membrane integrity. In Brucella suis (strain ATCC 23445 / NCTC 10510), this protein is Tol-Pal system protein TolB.